Consider the following 241-residue polypeptide: Methylthioribulose-1-phosphate dehydratase (241 aa).

Over residues 1 to 12 (MSQEITQKDNND) the composition is skewed to basic and acidic residues. Positions 1-22 (MSQEITQKDNNDHLVQSSDPDH) are disordered. Residue Cys101 coordinates substrate. Residues His118 and His120 each contribute to the Zn(2+) site. Glu147 acts as the Proton donor/acceptor in catalysis. His203 serves as a coordination point for Zn(2+).

Belongs to the aldolase class II family. MtnB subfamily. Zn(2+) serves as cofactor.

The protein localises to the cytoplasm. The enzyme catalyses 5-(methylsulfanyl)-D-ribulose 1-phosphate = 5-methylsulfanyl-2,3-dioxopentyl phosphate + H2O. It functions in the pathway amino-acid biosynthesis; L-methionine biosynthesis via salvage pathway; L-methionine from S-methyl-5-thio-alpha-D-ribose 1-phosphate: step 2/6. Its function is as follows. Catalyzes the dehydration of methylthioribulose-1-phosphate (MTRu-1-P) into 2,3-diketo-5-methylthiopentyl-1-phosphate (DK-MTP-1-P). The sequence is that of Methylthioribulose-1-phosphate dehydratase from Aspergillus terreus (strain NIH 2624 / FGSC A1156).